The sequence spans 688 residues: Elongation factor G (688 aa).

The tr-type G domain maps to 8 to 282 (DKFRNFGIMA…GVVDYLPSPL (275 aa)). GTP is bound by residues 17-24 (AHIDAGKT), 81-85 (DTPGH), and 135-138 (NKMD).

Belongs to the TRAFAC class translation factor GTPase superfamily. Classic translation factor GTPase family. EF-G/EF-2 subfamily.

It localises to the cytoplasm. Its function is as follows. Catalyzes the GTP-dependent ribosomal translocation step during translation elongation. During this step, the ribosome changes from the pre-translocational (PRE) to the post-translocational (POST) state as the newly formed A-site-bound peptidyl-tRNA and P-site-bound deacylated tRNA move to the P and E sites, respectively. Catalyzes the coordinated movement of the two tRNA molecules, the mRNA and conformational changes in the ribosome. This chain is Elongation factor G, found in Clostridium botulinum (strain Alaska E43 / Type E3).